Consider the following 681-residue polypeptide: Translation factor GUF1 homolog, chloroplastic (681 aa).

The N-terminal 51 residues, 1 to 51, are a transit peptide targeting the chloroplast; the sequence is MAMASAMDLSSPPTFFLSGTSTSSPSLRRLSSISVSGFRRHSNRKLQILCQ. The tr-type G domain maps to 84-265; the sequence is SNIRNFSIIA…AIVQRIPAPL (182 aa). Residues 93-100, 158-162, and 212-215 contribute to the GTP site; these read AHIDHGKS, DTPGH, and NKID.

Belongs to the TRAFAC class translation factor GTPase superfamily. Classic translation factor GTPase family. LepA subfamily.

The protein resides in the plastid. It is found in the chloroplast. It carries out the reaction GTP + H2O = GDP + phosphate + H(+). Promotes chloroplast protein synthesis. May act as a fidelity factor of the translation reaction, by catalyzing a one-codon backward translocation of tRNAs on improperly translocated ribosomes. This Arabidopsis thaliana (Mouse-ear cress) protein is Translation factor GUF1 homolog, chloroplastic.